Consider the following 198-residue polypeptide: Proteasome subunit beta type-4 (198 aa).

Met-1 bears the N-acetylmethionine mark. Ser-76 is subject to Phosphoserine.

This sequence belongs to the peptidase T1B family. The 26S proteasome consists of a 20S proteasome core and two 19S regulatory subunits. The 20S proteasome core is composed of 28 subunits that are arranged in four stacked rings, resulting in a barrel-shaped structure. The two end rings are each formed by seven alpha subunits, and the two central rings are each formed by seven beta subunits. The catalytic chamber with the active sites is on the inside of the barrel.

It localises to the cytoplasm. Its subcellular location is the nucleus. Functionally, non-catalytic component of the proteasome which degrades poly-ubiquitinated proteins in the cytoplasm and in the nucleus. It is essential for the regulated turnover of proteins and for the removal of misfolded proteins. The proteasome is a multicatalytic proteinase complex that is characterized by its ability to cleave peptides with Arg, Phe, Tyr, Leu, and Glu adjacent to the leaving group at neutral or slightly basic pH. It has an ATP-dependent proteolytic activity. This subunit has a chymotrypsin-like activity. In Saccharomyces cerevisiae (strain ATCC 204508 / S288c) (Baker's yeast), this protein is Proteasome subunit beta type-4 (PRE1).